The chain runs to 136 residues: MARTKQTARKSTGGKAPRKQLATKAARKSAPTTGGVKKPHRYRPGTVALREIRRYQKSTELLIRKLPFQRLVREIAQDFKTDLRFQSAAIGALQEASEAYLVGLFEDTNLCAIHAKRVTIMPKDIQLARRIRGERA.

The segment at 1-43 (MARTKQTARKSTGGKAPRKQLATKAARKSAPTTGGVKKPHRYR) is disordered. N6,N6,N6-trimethyllysine; alternate is present on residues lysine 5 and lysine 10. 2 positions are modified to N6,N6-dimethyllysine; alternate: lysine 5 and lysine 10. Residues lysine 5 and lysine 10 each carry the N6-acetyllysine; alternate modification. An N6-methyllysine; alternate modification is found at lysine 5. Serine 11 carries the post-translational modification Phosphoserine. N6-acetyllysine occurs at positions 15 and 24. Lysine 28 is subject to N6,N6,N6-trimethyllysine; alternate. Lysine 28 is modified (N6,N6-dimethyllysine; alternate). Lysine 28 is subject to N6-methyllysine; alternate. Serine 29 carries the phosphoserine modification. Lysine 37 carries the N6,N6,N6-trimethyllysine; alternate modification. Lysine 37 bears the N6-methyllysine; alternate mark. N6-methyllysine is present on lysine 80.

The protein belongs to the histone H3 family. In terms of assembly, the nucleosome is a histone octamer containing two molecules each of H2A, H2B, H3 and H4 assembled in one H3-H4 heterotetramer and two H2A-H2B heterodimers. The octamer wraps approximately 147 bp of DNA. Acetylation is generally linked to gene activation. Post-translationally, methylation at Lys-5 is linked to gene activation. Methylation at Lys-10 is linked to gene repression. Highly expressed in all adult nuclei.

It localises to the nucleus. Its subcellular location is the chromosome. Functionally, variant histone H3 which replaces conventional H3 in a wide range of nucleosomes in active genes. Constitutes the predominant form of histone H3 in non-dividing cells and is incorporated into chromatin independently of DNA synthesis. Deposited at sites of nucleosomal displacement throughout transcribed genes, suggesting that it represents an epigenetic imprint of transcriptionally active chromatin. Nucleosomes wrap and compact DNA into chromatin, limiting DNA accessibility to the cellular machineries which require DNA as a template. Histones thereby play a central role in transcription regulation, DNA repair, DNA replication and chromosomal stability. DNA accessibility is regulated via a complex set of post-translational modifications of histones, also called histone code, and nucleosome remodeling. This is Histone H3.3 type 1 (his-71) from Caenorhabditis elegans.